Consider the following 541-residue polypeptide: EH domain-containing protein 4 (541 aa).

N-acetylmethionine is present on Met-1. Residues 58–289 (FENKPMILLV…DLFRDIQSLP (232 aa)) enclose the Dynamin-type G domain. The tract at residues 68-75 (GQYSTGKT) is G1 motif. 68-75 (GQYSTGKT) lines the ATP pocket. Residues 94–95 (EP) are G2 motif. The interval 156–159 (DSPG) is G3 motif. The residue at position 162 (Ser-162) is a Phosphoserine. Residues 222–225 (NKAD) are G4 motif. Residue Lys-223 coordinates ATP. A region of interest (G5 motif) is located at residue Val-246. Residue Trp-261 participates in ATP binding. Residues 447–535 (DKPVYDELFY…PHLVPPSHRK (89 aa)) enclose the EH domain. Tyr-451 is modified (phosphotyrosine). Ser-459 carries the phosphoserine modification. The EF-hand domain occupies 479–514 (LPNSVLGKIWKLADCDCDGMLDEEEFALAKHLIKIK). Positions 492, 494, 496, 498, and 503 each coordinate Ca(2+).

Belongs to the TRAFAC class dynamin-like GTPase superfamily. Dynamin/Fzo/YdjA family. EHD subfamily. As to quaternary structure, homooligomer, and heterooligomer with EHD1, EHD2 and EHD3. Forms a complex with EHD4 and MICALL1; the complex controls CDH5 trafficking and coordinates angiogenesis. As to expression, highly expressed in pancreas and heart.

The protein localises to the early endosome membrane. The protein resides in the recycling endosome membrane. Its subcellular location is the cell membrane. It is found in the cell junction. It localises to the adherens junction. Functionally, ATP- and membrane-binding protein that probably controls membrane reorganization/tubulation upon ATP hydrolysis. Plays a role in early endosomal transport. During sprouting angiogenesis, in complex with PACSIN2 and MICALL1, forms recycling endosome-like tubular structure at asymmetric adherens junctions to control CDH5 trafficking. This chain is EH domain-containing protein 4, found in Homo sapiens (Human).